Reading from the N-terminus, the 301-residue chain is ATP synthase gamma chain (301 aa).

The protein belongs to the ATPase gamma chain family. F-type ATPases have 2 components, CF(1) - the catalytic core - and CF(0) - the membrane proton channel. CF(1) has five subunits: alpha(3), beta(3), gamma(1), delta(1), epsilon(1). CF(0) has three main subunits: a, b and c.

The protein resides in the cell inner membrane. In terms of biological role, produces ATP from ADP in the presence of a proton gradient across the membrane. The gamma chain is believed to be important in regulating ATPase activity and the flow of protons through the CF(0) complex. This chain is ATP synthase gamma chain, found in Helicobacter pylori (strain G27).